Here is a 186-residue protein sequence, read N- to C-terminus: uncharacterized protein (186 aa).

2 consecutive CBS domains span residues 10–69 and 77–133; these read IMKK…KLPP and ISSG…IIST.

This is an uncharacterized protein from Methanocaldococcus jannaschii (strain ATCC 43067 / DSM 2661 / JAL-1 / JCM 10045 / NBRC 100440) (Methanococcus jannaschii).